We begin with the raw amino-acid sequence, 70 residues long: Large ribosomal subunit protein uL29 (70 aa).

It belongs to the universal ribosomal protein uL29 family.

In Clostridium novyi (strain NT), this protein is Large ribosomal subunit protein uL29.